Reading from the N-terminus, the 624-residue chain is DNA damage response protein Mdb1 (624 aa).

3 disordered regions span residues 177–237 (ERIP…DDES), 249–386 (GETK…KNKH), and 591–624 (IGKR…EQRT). Composition is skewed to basic and acidic residues over residues 200 to 217 (DEKL…HSSD) and 225 to 235 (EDQKQLNKTDD). Polar residues predominate over residues 250 to 263 (ETKSPSSVSQSLSG). 2 positions are modified to phosphoserine: Ser-253 and Ser-283. Residues 294 to 305 (NISDSSIKNNSI) are compositionally biased toward low complexity. 2 stretches are compositionally biased toward basic and acidic residues: residues 306 to 316 (HSDEVNPEVRP) and 325 to 352 (EESK…REAE). A compositionally biased stretch (polar residues) spans 356-386 (ISTNYSFPSSSLEDQPDKNVQSSAVENKNKH). Positions 376-468 (QSSAVENKNK…KVLDFRSYKY (93 aa)) constitute a BRCT domain.

Homodimer. Interacts (via BRCT domain) with hta1 peptide containing the S/T-Q motif in vitro; this interaction requires phosphorylation of the hta1 peptide at the S/T-Q motif.

The protein localises to the nucleus. It is found in the chromosome. Its subcellular location is the cytoplasm. It localises to the cytoskeleton. The protein resides in the spindle. Involved in DNA damage response (DDR) mediated through its interaction with phosphorylated H2A proteins hta1 and hta2 which mark the discrete foci of DNA damage. This Schizosaccharomyces pombe (strain 972 / ATCC 24843) (Fission yeast) protein is DNA damage response protein Mdb1.